Reading from the N-terminus, the 525-residue chain is Glucose-6-phosphate isomerase (525 aa).

Catalysis depends on glutamate 347, which acts as the Proton donor. Catalysis depends on residues histidine 378 and lysine 493.

This sequence belongs to the GPI family.

The protein localises to the cytoplasm. It carries out the reaction alpha-D-glucose 6-phosphate = beta-D-fructose 6-phosphate. The protein operates within carbohydrate biosynthesis; gluconeogenesis. Its pathway is carbohydrate degradation; glycolysis; D-glyceraldehyde 3-phosphate and glycerone phosphate from D-glucose: step 2/4. In terms of biological role, catalyzes the reversible isomerization of glucose-6-phosphate to fructose-6-phosphate. The polypeptide is Glucose-6-phosphate isomerase (Chlamydia trachomatis serovar D (strain ATCC VR-885 / DSM 19411 / UW-3/Cx)).